The following is a 429-amino-acid chain: Histidine--tRNA ligase (429 aa).

Belongs to the class-II aminoacyl-tRNA synthetase family. In terms of assembly, homodimer.

The protein resides in the cytoplasm. The enzyme catalyses tRNA(His) + L-histidine + ATP = L-histidyl-tRNA(His) + AMP + diphosphate + H(+). This is Histidine--tRNA ligase from Cyanothece sp. (strain PCC 7425 / ATCC 29141).